A 438-amino-acid chain; its full sequence is Putative F-box protein At5g15660 (438 aa).

The segment at 1–24 (MRRRSKKIKTENNSNPETSEERNK) is disordered. Positions 22-68 (RNKFDEIPHDLVIEILERLPLKSVARFLTVSKLWATTIRSPDFRKSY) constitute an F-box domain.

In Arabidopsis thaliana (Mouse-ear cress), this protein is Putative F-box protein At5g15660.